Here is a 125-residue protein sequence, read N- to C-terminus: Mite group 2 allergen Gly d 2.02 (125 aa).

Belongs to the NPC2 family.

The protein localises to the secreted. The protein is Mite group 2 allergen Gly d 2.02 of Glycyphagus domesticus (House itch mite).